Here is a 284-residue protein sequence, read N- to C-terminus: MPLAQDAPAKINLGLHVLRRRPDGYHDIETVLHRIDWADTITATPADTLSLTCSDPSLPTDRDNLCLQAAHRLASACDVPAGADLHLEKRVPYGAGLGSGSSDAAATLRLLARLWDVDPTSETLQEIGRTIGADVPFFLQDAPAAYATGRGDTLSPLSKDGASYRLPFSLLIAVPSAEIATPWAYDRVTPAEANRPDLRRLVLSNDLSRWDEALTNDFAPPVTTAIPAVDAARTALRATDAACVSLSGSGSAVYGLFEETAAARAALQSLKPRDLRTHLMPAPN.

The active site involves Lys-10. 92–102 serves as a coordination point for ATP; that stretch reads PYGAGLGSGSS. The active site involves Asp-134.

Belongs to the GHMP kinase family. IspE subfamily.

It carries out the reaction 4-CDP-2-C-methyl-D-erythritol + ATP = 4-CDP-2-C-methyl-D-erythritol 2-phosphate + ADP + H(+). It participates in isoprenoid biosynthesis; isopentenyl diphosphate biosynthesis via DXP pathway; isopentenyl diphosphate from 1-deoxy-D-xylulose 5-phosphate: step 3/6. Catalyzes the phosphorylation of the position 2 hydroxy group of 4-diphosphocytidyl-2C-methyl-D-erythritol. The sequence is that of 4-diphosphocytidyl-2-C-methyl-D-erythritol kinase from Salinibacter ruber (strain DSM 13855 / M31).